We begin with the raw amino-acid sequence, 143 residues long: Nucleoside diphosphate kinase (143 aa).

Residues lysine 11, phenylalanine 59, arginine 87, threonine 93, arginine 104, and asparagine 114 each coordinate ATP. Residue histidine 117 is the Pros-phosphohistidine intermediate of the active site.

Belongs to the NDK family. In terms of assembly, homotetramer. The cofactor is Mg(2+).

The protein resides in the cytoplasm. It carries out the reaction a 2'-deoxyribonucleoside 5'-diphosphate + ATP = a 2'-deoxyribonucleoside 5'-triphosphate + ADP. It catalyses the reaction a ribonucleoside 5'-diphosphate + ATP = a ribonucleoside 5'-triphosphate + ADP. Its function is as follows. Major role in the synthesis of nucleoside triphosphates other than ATP. The ATP gamma phosphate is transferred to the NDP beta phosphate via a ping-pong mechanism, using a phosphorylated active-site intermediate. The chain is Nucleoside diphosphate kinase from Shewanella loihica (strain ATCC BAA-1088 / PV-4).